We begin with the raw amino-acid sequence, 204 residues long: uncharacterized protein (204 aa).

The next 4 helical transmembrane spans lie at 21–50 (AWIV…LLFF), 92–114 (FFTA…WWWF), 150–172 (LGLR…VLSI), and 176–198 (LLAS…ETIL).

It is found in the cell membrane. This is an uncharacterized protein from Aquifex aeolicus (strain VF5).